The primary structure comprises 372 residues: 2-aminoethylphosphonate--pyruvate transaminase 2 (372 aa).

The residue at position 192 (Lys-192) is an N6-(pyridoxal phosphate)lysine.

This sequence belongs to the class-V pyridoxal-phosphate-dependent aminotransferase family. PhnW subfamily. As to quaternary structure, homodimer. It depends on pyridoxal 5'-phosphate as a cofactor.

The catalysed reaction is (2-aminoethyl)phosphonate + pyruvate = phosphonoacetaldehyde + L-alanine. In terms of biological role, involved in phosphonate degradation. The polypeptide is 2-aminoethylphosphonate--pyruvate transaminase 2 (Polaromonas sp. (strain JS666 / ATCC BAA-500)).